We begin with the raw amino-acid sequence, 103 residues long: Cell division suppressor protein YneA (103 aa).

The LysM domain maps to 36 to 87 (VKIKVQDGDTLWSLADHVAEKKHINKEDFIEWVTENNHLQTADIKPGDELIL).

Belongs to the YneA family.

It localises to the cytoplasm. In terms of biological role, inhibits cell division during the SOS response. Affects a later stage of the cell division protein assembly, after the assembly of the Z ring, by probably suppressing recruitment of FtsL and/or DivIC to the division machinery. This Bacillus velezensis (strain DSM 23117 / BGSC 10A6 / LMG 26770 / FZB42) (Bacillus amyloliquefaciens subsp. plantarum) protein is Cell division suppressor protein YneA.